Here is a 410-residue protein sequence, read N- to C-terminus: uncharacterized protein (410 aa).

His87 is a Zn(2+) binding site. Residue Asp89 is part of the active site. Asp120 provides a ligand contact to Zn(2+). Residue Glu154 is the Proton acceptor of the active site. Positions 155, 184, and 387 each coordinate Zn(2+).

Belongs to the peptidase M20A family. Zn(2+) is required as a cofactor. The cofactor is Co(2+).

This is an uncharacterized protein from Methanocaldococcus jannaschii (strain ATCC 43067 / DSM 2661 / JAL-1 / JCM 10045 / NBRC 100440) (Methanococcus jannaschii).